We begin with the raw amino-acid sequence, 196 residues long: MRSVSVGEVARRDVITGSPTETAVEIAYKMREHGIGSVVIVNEKDEPIGIITERDLVIKVVSQGKNPDEVIARDIMSQPVITVEEDMEVNEAVKLMVDKGIRRLPIVDDNGKLIGIVTMQDILQVEPYLVATIEEEMKKFQEELEELEEVSEIIEGVCDLCETYSEELRFVDGVWVCPECYEDILGREIEDRELEE.

2 consecutive CBS domains span residues 10–69 (ARRD…NPDE) and 76–132 (MSQP…LVAT). Positions 153 to 187 (IIEGVCDLCETYSEELRFVDGVWVCPECYEDILGR) constitute an ACP-type MB domain. Residues C158, C161, C177, and C180 each coordinate Fe cation. Zn(2+) is bound by residues C158, C161, C177, and C180.

This is an uncharacterized protein from Methanopyrus kandleri (strain AV19 / DSM 6324 / JCM 9639 / NBRC 100938).